The primary structure comprises 188 residues: Acireductone dioxygenase (188 aa).

Residues H97, H99, E103, and H141 each contribute to the Fe(2+) site. Ni(2+)-binding residues include H97, H99, E103, and H141.

The protein belongs to the acireductone dioxygenase (ARD) family. As to quaternary structure, monomer. Fe(2+) serves as cofactor. The cofactor is Ni(2+).

It carries out the reaction 1,2-dihydroxy-5-(methylsulfanyl)pent-1-en-3-one + O2 = 3-(methylsulfanyl)propanoate + CO + formate + 2 H(+). The enzyme catalyses 1,2-dihydroxy-5-(methylsulfanyl)pent-1-en-3-one + O2 = 4-methylsulfanyl-2-oxobutanoate + formate + 2 H(+). Its pathway is amino-acid biosynthesis; L-methionine biosynthesis via salvage pathway; L-methionine from S-methyl-5-thio-alpha-D-ribose 1-phosphate: step 5/6. Functionally, catalyzes 2 different reactions between oxygen and the acireductone 1,2-dihydroxy-3-keto-5-methylthiopentene (DHK-MTPene) depending upon the metal bound in the active site. Fe-containing acireductone dioxygenase (Fe-ARD) produces formate and 2-keto-4-methylthiobutyrate (KMTB), the alpha-ketoacid precursor of methionine in the methionine recycle pathway. Ni-containing acireductone dioxygenase (Ni-ARD) produces methylthiopropionate, carbon monoxide and formate, and does not lie on the methionine recycle pathway. This chain is Acireductone dioxygenase, found in Xylella fastidiosa (strain 9a5c).